The sequence spans 253 residues: Chitooligosaccharide deacetylase (253 aa).

Mg(2+)-binding residues include histidine 61 and histidine 126.

Belongs to the YdjC deacetylase family. ChbG subfamily. In terms of assembly, homodimer. Requires Mg(2+) as cofactor.

It localises to the cytoplasm. The catalysed reaction is N,N'-diacetylchitobiose + H2O = N-acetyl-beta-D-glucosaminyl-(1-&gt;4)-D-glucosamine + acetate. The enzyme catalyses diacetylchitobiose-6'-phosphate + H2O = N'-monoacetylchitobiose-6'-phosphate + acetate. It functions in the pathway glycan degradation; chitin degradation. In terms of biological role, involved in the degradation of chitin. ChbG is essential for growth on the acetylated chitooligosaccharides chitobiose and chitotriose but is dispensable for growth on cellobiose and chitosan dimer, the deacetylated form of chitobiose. Deacetylation of chitobiose-6-P and chitotriose-6-P is necessary for both the activation of the chb promoter by the regulatory protein ChbR and the hydrolysis of phosphorylated beta-glucosides by the phospho-beta-glucosidase ChbF. Catalyzes the removal of only one acetyl group from chitobiose-6-P to yield monoacetylchitobiose-6-P, the inducer of ChbR and the substrate of ChbF. This chain is Chitooligosaccharide deacetylase, found in Yersinia pestis bv. Antiqua (strain Angola).